A 119-amino-acid chain; its full sequence is Protein TusC (119 aa).

It belongs to the DsrF/TusC family. As to quaternary structure, heterohexamer, formed by a dimer of trimers. The hexameric TusBCD complex contains 2 copies each of TusB, TusC and TusD. The TusBCD complex interacts with TusE.

It localises to the cytoplasm. Part of a sulfur-relay system required for 2-thiolation of 5-methylaminomethyl-2-thiouridine (mnm(5)s(2)U) at tRNA wobble positions. The polypeptide is Protein TusC (Shigella dysenteriae serotype 1 (strain Sd197)).